We begin with the raw amino-acid sequence, 226 residues long: MALSDVDVKKQIKHMMAFIEQEANEKAEEIDAKAEEEFNIEKGRLVQTQRLKIMEYYEKKEKQIEQQKKILMSTMRNQARLKVLRARNDLISDLLSEAKLRLSRIVEDPEVYQGLLDKLVLQGLLRLLEPVMIVRCRPQDLLLVEAAVQKAIPEYMTISQKHVEVQIDKEAYLAVNAAGGVEVYSGNQRIKVSNTLESRLDLSAKQKMPEIRMALFGANTNRKFFI.

This sequence belongs to the V-ATPase E subunit family. As to quaternary structure, V-ATPase is a heteromultimeric enzyme made up of two complexes: the ATP-hydrolytic V1 complex and the proton translocation V0 complex. The V1 complex consists of three catalytic AB heterodimers that form a heterohexamer, three peripheral stalks each consisting of EG heterodimers, one central rotor including subunits D and F, and the regulatory subunits C and H. The proton translocation complex V0 consists of the proton transport subunit a, a ring of proteolipid subunits c9c'', rotary subunit d, subunits e and f, and the accessory subunits ATP6AP1/Ac45 and ATP6AP2/PRR. As to expression, testis specific.

Its function is as follows. Subunit of the V1 complex of vacuolar(H+)-ATPase (V-ATPase), a multisubunit enzyme composed of a peripheral complex (V1) that hydrolyzes ATP and a membrane integral complex (V0) that translocates protons. V-ATPase is responsible for acidifying and maintaining the pH of intracellular compartments and in some cell types, is targeted to the plasma membrane, where it is responsible for acidifying the extracellular environment. This Homo sapiens (Human) protein is V-type proton ATPase subunit E 2 (ATP6V1E2).